The sequence spans 286 residues: MAMEGYWRFLALLGSALLVGFLSVIFALVWVLHYREGLGWDGSALEFNWHPVLMVTGFVFIQGIAIIVYRLPWTWKCSKLLMKSIHAGLNAVAAILAIISVVAVFENHNVNNIANMYSLHSWVGLIAVICYLLQLLSGFSVFLLPWAPLSLRAFLMPIHVYSGIVIFGTVIATALMGLTEKLIFSLRDPAYSTFPPEGVFVNTLGLLILVFGALIFWIVTRPQWKRPKEPNSTILHPNGGTEQGARGSMPAYSGNNMDKSDSELNSEVAARKRNLALDEAGQRSTM.

Topologically, residues 1–7 (MAMEGYW) are cytoplasmic. Residues 8–32 (RFLALLGSALLVGFLSVIFALVWVL) form a helical membrane-spanning segment. The region spanning 15-220 (SALLVGFLSV…FGALIFWIVT (206 aa)) is the Cytochrome b561 domain. Over 33 to 47 (HYREGLGWDGSALEF) the chain is Extracellular. Residues 48-69 (NWHPVLMVTGFVFIQGIAIIVY) form a helical membrane-spanning segment. Residues His-50, Arg-70, and Lys-79 each coordinate heme b. Residues 70–78 (RLPWTWKCS) are Cytoplasmic-facing. Lys-79 and Lys-83 together coordinate L-ascorbate. Residues 79–105 (KLLMKSIHAGLNAVAAILAIISVVAVF) traverse the membrane as a helical segment. Heme b is bound at residue His-86. The Extracellular portion of the chain corresponds to 106-118 (ENHNVNNIANMYS). A Fe(3+)-binding site is contributed by His-108. Heme b-binding positions include 115–118 (NMYS) and His-120. Residues 119–144 (LHSWVGLIAVICYLLQLLSGFSVFLL) form a helical membrane-spanning segment. Topologically, residues 145 to 151 (PWAPLSL) are cytoplasmic. Arg-152 contacts L-ascorbate. A helical transmembrane segment spans residues 152–179 (RAFLMPIHVYSGIVIFGTVIATALMGLT). Residues His-159 and Glu-180 each contribute to the heme b site. The Extracellular portion of the chain corresponds to 180-197 (EKLIFSLRDPAYSTFPPE). A helical transmembrane segment spans residues 198-222 (GVFVNTLGLLILVFGALIFWIVTRP). Topologically, residues 223–286 (QWKRPKEPNS…LDEAGQRSTM (64 aa)) are cytoplasmic. Lys-225 is a binding site for heme b. Residues 229–268 (EPNSTILHPNGGTEQGARGSMPAYSGNNMDKSDSELNSEV) form a disordered region. Position 232 is a phosphoserine (Ser-232). The residue at position 285 (Thr-285) is a Phosphothreonine.

As to quaternary structure, homodimer. The cofactor is heme b. In terms of tissue distribution, present in erythrocyte membranes (at protein level). Also expressed in respiratory epithelium.

It is found in the cell membrane. The protein localises to the apical cell membrane. The enzyme catalyses Fe(3+)(out) + L-ascorbate(in) = monodehydro-L-ascorbate radical(in) + Fe(2+)(out) + H(+). It carries out the reaction Cu(2+)(out) + L-ascorbate(in) = Cu(+)(out) + monodehydro-L-ascorbate radical(in) + H(+). It catalyses the reaction monodehydro-L-ascorbate radical(out) + L-ascorbate(in) = monodehydro-L-ascorbate radical(in) + L-ascorbate(out). Activated by chelators like citrate, malate, and oxalate specially at alkaline pH. Functionally, plasma membrane reductase that uses cytoplasmic ascorbate as an electron donor to reduce extracellular Fe(3+) into Fe(2+). Probably functions in dietary iron absorption at the brush border of duodenal enterocytes by producing Fe(2+), the divalent form of iron that can be transported into enterocytes. It is also able to reduce extracellular monodehydro-L-ascorbate and may be involved in extracellular ascorbate regeneration by erythrocytes in blood. May also act as a ferrireductase in airway epithelial cells. May also function as a cupric transmembrane reductase. The protein is Plasma membrane ascorbate-dependent reductase CYBRD1 of Homo sapiens (Human).